A 70-amino-acid chain; its full sequence is DNA-directed RNA polymerase subunit epsilon (70 aa).

It belongs to the RNA polymerase subunit epsilon family. As to quaternary structure, RNAP is composed of a core of 2 alpha, a beta and a beta' subunit. The core is associated with a delta subunit, and at least one of epsilon or omega. When a sigma factor is associated with the core the holoenzyme is formed, which can initiate transcription.

The catalysed reaction is RNA(n) + a ribonucleoside 5'-triphosphate = RNA(n+1) + diphosphate. In terms of biological role, a non-essential component of RNA polymerase (RNAP). In Bacillus mycoides (strain KBAB4) (Bacillus weihenstephanensis), this protein is DNA-directed RNA polymerase subunit epsilon.